A 255-amino-acid polypeptide reads, in one-letter code: Imidazole glycerol phosphate synthase subunit HisF (255 aa).

Active-site residues include Asp-12 and Asp-131.

It belongs to the HisA/HisF family. In terms of assembly, heterodimer of HisH and HisF.

It is found in the cytoplasm. It carries out the reaction 5-[(5-phospho-1-deoxy-D-ribulos-1-ylimino)methylamino]-1-(5-phospho-beta-D-ribosyl)imidazole-4-carboxamide + L-glutamine = D-erythro-1-(imidazol-4-yl)glycerol 3-phosphate + 5-amino-1-(5-phospho-beta-D-ribosyl)imidazole-4-carboxamide + L-glutamate + H(+). It participates in amino-acid biosynthesis; L-histidine biosynthesis; L-histidine from 5-phospho-alpha-D-ribose 1-diphosphate: step 5/9. Functionally, IGPS catalyzes the conversion of PRFAR and glutamine to IGP, AICAR and glutamate. The HisF subunit catalyzes the cyclization activity that produces IGP and AICAR from PRFAR using the ammonia provided by the HisH subunit. This is Imidazole glycerol phosphate synthase subunit HisF from Neisseria meningitidis serogroup C (strain 053442).